The following is a 145-amino-acid chain: Large ribosomal subunit protein bL35c (145 aa).

A chloroplast-targeting transit peptide spans 1–56 (MASLSMASVNVSFCHPLRSSSPKVSLRSSVHFATSLSSSHSISGLRAVLPLKISTV).

This sequence belongs to the bacterial ribosomal protein bL35 family. As to quaternary structure, part of the 50S ribosomal subunit.

It is found in the plastid. The protein resides in the chloroplast. This is Large ribosomal subunit protein bL35c from Arabidopsis thaliana (Mouse-ear cress).